The sequence spans 501 residues: ATP-dependent rRNA helicase RRP3 (501 aa).

Residues 3–44 adopt a coiled-coil conformation; sequence KIVKRKEKKANDELTSLAEKIRAKALENQKKLIEAEKEGGSE. The tract at residues 36–79 is disordered; sequence EAEKEGGSESDSEEDATAEKKKVLKSKSKSTVSTQNENTNEDES. A phosphoserine mark is found at Ser43, Ser45, and Ser47. The Q motif motif lies at 81–109; sequence ESFSELNLVPELIQACKNLNYSKPTPIQS. A Helicase ATP-binding domain is found at 112-284; the sequence is IPPALEGHDI…RASLTNPVKC (173 aa). 125–132 contacts ATP; it reads AQTGSGKT. Residues 231–234 carry the DEAD box motif; that stretch reads DEAD. In terms of domain architecture, Helicase C-terminal spans 307–461; it reads LKNTYLIYLL…NIILTLRDSV (155 aa). The segment at 480-501 is disordered; it reads IARGKGRRGRMMTRENMDMGER. Positions 491–501 are enriched in basic and acidic residues; it reads MTRENMDMGER.

The protein belongs to the DEAD box helicase family. DDX47/RRP3 subfamily. As to quaternary structure, interacts with the SSU processome.

The protein localises to the nucleus. The enzyme catalyses ATP + H2O = ADP + phosphate + H(+). Its activity is regulated as follows. ATPase activity is stimulated upon the addition of RNA. Functionally, ATP-dependent rRNA helicase required for pre-ribosomal RNA processing. Involved in the maturation of the 35S-pre-rRNA and to its cleavage to mature 18S rRNA. This Saccharomyces cerevisiae (strain ATCC 204508 / S288c) (Baker's yeast) protein is ATP-dependent rRNA helicase RRP3.